The sequence spans 431 residues: 5-methylthioadenosine/S-adenosylhomocysteine deaminase (431 aa).

Zn(2+) contacts are provided by His-63 and His-65. Substrate contacts are provided by Glu-92, Arg-144, and His-184. His-211 contacts Zn(2+). The substrate site is built by Glu-214 and Asp-299. Asp-299 is a Zn(2+) binding site.

The protein belongs to the metallo-dependent hydrolases superfamily. MTA/SAH deaminase family. It depends on Zn(2+) as a cofactor.

The enzyme catalyses S-adenosyl-L-homocysteine + H2O + H(+) = S-inosyl-L-homocysteine + NH4(+). It carries out the reaction S-methyl-5'-thioadenosine + H2O + H(+) = S-methyl-5'-thioinosine + NH4(+). In terms of biological role, catalyzes the deamination of 5-methylthioadenosine and S-adenosyl-L-homocysteine into 5-methylthioinosine and S-inosyl-L-homocysteine, respectively. Is also able to deaminate adenosine. This chain is 5-methylthioadenosine/S-adenosylhomocysteine deaminase, found in Thermoanaerobacter pseudethanolicus (strain ATCC 33223 / 39E) (Clostridium thermohydrosulfuricum).